The following is a 179-amino-acid chain: tRNA (cytidine(56)-2'-O)-methyltransferase (179 aa).

Residues Leu82, 110-114 (GAEKV), and 128-135 (VGNQPHSE) each bind S-adenosyl-L-methionine.

It belongs to the aTrm56 family. Homodimer.

Its subcellular location is the cytoplasm. The catalysed reaction is cytidine(56) in tRNA + S-adenosyl-L-methionine = 2'-O-methylcytidine(56) in tRNA + S-adenosyl-L-homocysteine + H(+). Functionally, specifically catalyzes the AdoMet-dependent 2'-O-ribose methylation of cytidine at position 56 in tRNAs. This chain is tRNA (cytidine(56)-2'-O)-methyltransferase, found in Methanocaldococcus jannaschii (strain ATCC 43067 / DSM 2661 / JAL-1 / JCM 10045 / NBRC 100440) (Methanococcus jannaschii).